The sequence spans 138 residues: Acidic phospholipase A2 BE-I-PLA2 (138 aa).

Residues Met-1–Gly-16 form the signal peptide. Disulfide bonds link Cys-42–Cys-131, Cys-44–Cys-60, Cys-59–Cys-111, Cys-65–Cys-138, Cys-66–Cys-104, Cys-73–Cys-97, and Cys-91–Cys-102. Ca(2+) is bound by residues Tyr-43, Gly-45, and Gly-47. The active site involves His-63. Asp-64 lines the Ca(2+) pocket. Asp-105 is an active-site residue.

This sequence belongs to the phospholipase A2 family. Group II subfamily. D49 sub-subfamily. Ca(2+) is required as a cofactor. In terms of tissue distribution, expressed by the venom gland.

It is found in the secreted. The catalysed reaction is a 1,2-diacyl-sn-glycero-3-phosphocholine + H2O = a 1-acyl-sn-glycero-3-phosphocholine + a fatty acid + H(+). Its function is as follows. Snake venom phospholipase A2 that shows a potent inhibition of human platelet aggregation. This inhibition is concentration-dependent when aggregation is induced by collagen, and concentration-independent when aggregation is induced by arachidonic acid. In human umbilical-cord vein endothelial cells, this toxin stimulates endothelial cells to release prostaglandin I(2), suggesting an increase of its potential anti-platelet activity in vivo. PLA2 catalyzes the calcium-dependent hydrolysis of the 2-acyl groups in 3-sn-phosphoglycerides. This chain is Acidic phospholipase A2 BE-I-PLA2, found in Bothrops erythromelas (Caatinga lance head).